We begin with the raw amino-acid sequence, 693 residues long: Polyribonucleotide nucleotidyltransferase (693 aa).

Mg(2+) contacts are provided by Asp489 and Asp495. The KH domain occupies 556–615 (PQIHVMNINPAKIKDVVGRGGATVKGIVEKTGAQIDTSDSGEVKVFAKDKKSMDMAVAMI). The S1 motif domain occupies 625 to 693 (GQVYKGKIVK…GRVKLSLVAR (69 aa)).

It belongs to the polyribonucleotide nucleotidyltransferase family. As to quaternary structure, component of the RNA degradosome, which is a multiprotein complex involved in RNA processing and mRNA degradation. Requires Mg(2+) as cofactor.

It is found in the cytoplasm. It catalyses the reaction RNA(n+1) + phosphate = RNA(n) + a ribonucleoside 5'-diphosphate. Involved in mRNA degradation. Catalyzes the phosphorolysis of single-stranded polyribonucleotides processively in the 3'- to 5'-direction. This Francisella tularensis subsp. tularensis (strain WY96-3418) protein is Polyribonucleotide nucleotidyltransferase.